We begin with the raw amino-acid sequence, 541 residues long: Membrane protein insertase YidC (541 aa).

The next 5 helical transmembrane spans lie at 7-27 (LLFM…QVDY), 345-365 (LVQN…AVLY), 415-435 (LGGC…YWTF), 453-473 (LSAQ…MFLL), and 492-512 (FMPL…VLYW).

Belongs to the OXA1/ALB3/YidC family. Type 1 subfamily. In terms of assembly, interacts with the Sec translocase complex via SecD. Specifically interacts with transmembrane segments of nascent integral membrane proteins during membrane integration.

It localises to the cell inner membrane. Required for the insertion and/or proper folding and/or complex formation of integral membrane proteins into the membrane. Involved in integration of membrane proteins that insert both dependently and independently of the Sec translocase complex, as well as at least some lipoproteins. Aids folding of multispanning membrane proteins. This chain is Membrane protein insertase YidC, found in Histophilus somni (strain 2336) (Haemophilus somnus).